Here is a 282-residue protein sequence, read N- to C-terminus: 2-dehydro-3-deoxyphosphooctonate aldolase (282 aa).

This sequence belongs to the KdsA family.

The protein localises to the cytoplasm. It catalyses the reaction D-arabinose 5-phosphate + phosphoenolpyruvate + H2O = 3-deoxy-alpha-D-manno-2-octulosonate-8-phosphate + phosphate. It functions in the pathway carbohydrate biosynthesis; 3-deoxy-D-manno-octulosonate biosynthesis; 3-deoxy-D-manno-octulosonate from D-ribulose 5-phosphate: step 2/3. It participates in bacterial outer membrane biogenesis; lipopolysaccharide biosynthesis. This chain is 2-dehydro-3-deoxyphosphooctonate aldolase, found in Shewanella sp. (strain MR-4).